We begin with the raw amino-acid sequence, 473 residues long: Trigger factor (473 aa).

One can recognise a PPIase FKBP-type domain in the interval 174 to 261; sequence GDIAVVSFKG…LKDLKEKELP (88 aa). The tract at residues 442–473 is disordered; that stretch reads ATKLTTKTTTKATTKKGVKTKSKPKVNKKEKN. Low complexity predominate over residues 444–453; the sequence is KLTTKTTTKA. The span at 454-467 shows a compositional bias: basic residues; sequence TTKKGVKTKSKPKV.

The protein belongs to the FKBP-type PPIase family. Tig subfamily.

It localises to the cytoplasm. The enzyme catalyses [protein]-peptidylproline (omega=180) = [protein]-peptidylproline (omega=0). Functionally, involved in protein export. Acts as a chaperone by maintaining the newly synthesized protein in an open conformation. Functions as a peptidyl-prolyl cis-trans isomerase. This chain is Trigger factor, found in Prochlorococcus marinus subsp. pastoris (strain CCMP1986 / NIES-2087 / MED4).